The sequence spans 202 residues: Adenylyl-sulfate kinase (202 aa).

Residue 35-42 (GLSGSGKS) coordinates ATP. The Phosphoserine intermediate role is filled by Ser-109.

The protein belongs to the APS kinase family.

It carries out the reaction adenosine 5'-phosphosulfate + ATP = 3'-phosphoadenylyl sulfate + ADP + H(+). Its pathway is sulfur metabolism; hydrogen sulfide biosynthesis; sulfite from sulfate: step 2/3. In terms of biological role, catalyzes the synthesis of activated sulfate. The polypeptide is Adenylyl-sulfate kinase (Bacteroides fragilis (strain ATCC 25285 / DSM 2151 / CCUG 4856 / JCM 11019 / LMG 10263 / NCTC 9343 / Onslow / VPI 2553 / EN-2)).